We begin with the raw amino-acid sequence, 380 residues long: Chorismate synthase (380 aa).

2 residues coordinate NADP(+): Arg-48 and Arg-53. FMN is bound by residues 126–128 (RAS), Gly-284, 299–303 (KPTSS), and Arg-326.

This sequence belongs to the chorismate synthase family. It depends on FMNH2 as a cofactor.

The enzyme catalyses 5-O-(1-carboxyvinyl)-3-phosphoshikimate = chorismate + phosphate. Its pathway is metabolic intermediate biosynthesis; chorismate biosynthesis; chorismate from D-erythrose 4-phosphate and phosphoenolpyruvate: step 7/7. Its function is as follows. Catalyzes the anti-1,4-elimination of the C-3 phosphate and the C-6 proR hydrogen from 5-enolpyruvylshikimate-3-phosphate (EPSP) to yield chorismate, which is the branch point compound that serves as the starting substrate for the three terminal pathways of aromatic amino acid biosynthesis. This reaction introduces a second double bond into the aromatic ring system. The sequence is that of Chorismate synthase from Ignicoccus hospitalis (strain KIN4/I / DSM 18386 / JCM 14125).